Here is an 858-residue protein sequence, read N- to C-terminus: Beta-galactosidase 6 (858 aa).

A signal peptide spans 1 to 30 (MAAATVGVLLRLLLLPVVVVVSLLVGASRA). Asparagine 32 carries N-linked (GlcNAc...) asparagine glycosylation. Glutamate 189 serves as the catalytic Proton donor. Glutamate 258 functions as the Nucleophile in the catalytic mechanism. Asparagine 259, asparagine 482, asparagine 507, asparagine 595, and asparagine 830 each carry an N-linked (GlcNAc...) asparagine glycan. One can recognise an SUEL-type lectin domain in the interval 772–858 (QTQGPALRLE…KSLVVEAACS (87 aa)).

The protein belongs to the glycosyl hydrolase 35 family.

It localises to the secreted. Its subcellular location is the extracellular space. The protein resides in the apoplast. It catalyses the reaction Hydrolysis of terminal non-reducing beta-D-galactose residues in beta-D-galactosides.. In terms of biological role, releases galactose by hydrolysis of plant cell wall galactose-containing polysaccharides such as galacto-xyloglucan, pectic galactan and galactan (in vitro). The protein is Beta-galactosidase 6 of Oryza sativa subsp. japonica (Rice).